The primary structure comprises 255 residues: Flagellar brake protein YcgR (255 aa).

The 116-residue stretch at 130 to 245 folds into the PilZ domain; sequence QRREHFRVPL…MAAHLQRFVM (116 aa).

Belongs to the YcgR family. Monomer. Interacts with the flagellar basal bodies.

The protein resides in the bacterial flagellum basal body. Its function is as follows. Acts as a flagellar brake, regulating swimming and swarming in a bis-(3'-5') cyclic diguanylic acid (c-di-GMP)-dependent manner. Binds 1 c-di-GMP dimer per subunit. Increasing levels of c-di-GMP lead to decreased motility. The polypeptide is Flagellar brake protein YcgR (Thiobacillus denitrificans (strain ATCC 25259 / T1)).